The sequence spans 387 residues: Succinate--CoA ligase [ADP-forming] subunit beta (387 aa).

The region spanning 9 to 236 is the ATP-grasp domain; that stretch reads KELFAKHNVP…RAATDPLELK (228 aa). Residues lysine 45, 52–54, serine 94, and glutamate 99 contribute to the ATP site; that span reads GRG. 2 residues coordinate Mg(2+): asparagine 191 and aspartate 205. Residues asparagine 256 and 318-320 contribute to the substrate site; that span reads GIT.

It belongs to the succinate/malate CoA ligase beta subunit family. In terms of assembly, heterotetramer of two alpha and two beta subunits. It depends on Mg(2+) as a cofactor.

The catalysed reaction is succinate + ATP + CoA = succinyl-CoA + ADP + phosphate. It carries out the reaction GTP + succinate + CoA = succinyl-CoA + GDP + phosphate. Its pathway is carbohydrate metabolism; tricarboxylic acid cycle; succinate from succinyl-CoA (ligase route): step 1/1. In terms of biological role, succinyl-CoA synthetase functions in the citric acid cycle (TCA), coupling the hydrolysis of succinyl-CoA to the synthesis of either ATP or GTP and thus represents the only step of substrate-level phosphorylation in the TCA. The beta subunit provides nucleotide specificity of the enzyme and binds the substrate succinate, while the binding sites for coenzyme A and phosphate are found in the alpha subunit. This is Succinate--CoA ligase [ADP-forming] subunit beta from Mycobacterium bovis (strain ATCC BAA-935 / AF2122/97).